A 159-amino-acid polypeptide reads, in one-letter code: Vesicle transport protein SFT2B (159 aa).

N-acetylmethionine is present on Met1. Residues 1–36 are Cytoplasmic-facing; sequence MDKLKKVLSGQDTEDRSGLSEVVEASSLSWGTRIKG. Position 9 is a phosphoserine (Ser9). Residues 37 to 57 form a helical membrane-spanning segment; the sequence is FIACFALGILCSVLGTLLLWV. The Lumenal segment spans residues 58–63; that stretch reads PRKGLG. A helical membrane pass occupies residues 64 to 84; sequence LFAVFYTLGNIMSIGSTVFLM. Residues 85 to 98 are Cytoplasmic-facing; sequence GPLKQLKRMFEPTR. The helical transmembrane segment at 99-119 threads the bilayer; the sequence is LIATILVLLCFALTLCSAFLW. Over 120 to 122 the chain is Lumenal; the sequence is NKG. A helical membrane pass occupies residues 123-143; that stretch reads LALIFCILQSLALTWYSLSYI. The Cytoplasmic segment spans residues 144–159; the sequence is PYARDAVKKCFAVCLA.

It belongs to the SFT2 family.

Its subcellular location is the membrane. In terms of biological role, may be involved in fusion of retrograde transport vesicles derived from an endocytic compartment with the Golgi complex. The sequence is that of Vesicle transport protein SFT2B from Mus musculus (Mouse).